The primary structure comprises 203 residues: A-type ATP synthase subunit E (203 aa).

This sequence belongs to the V-ATPase E subunit family. As to quaternary structure, has multiple subunits with at least A(3), B(3), C, D, E, F, H, I and proteolipid K(x).

Its subcellular location is the cell membrane. Functionally, component of the A-type ATP synthase that produces ATP from ADP in the presence of a proton gradient across the membrane. The chain is A-type ATP synthase subunit E from Thermococcus sibiricus (strain DSM 12597 / MM 739).